Reading from the N-terminus, the 666-residue chain is Vicilin-like antimicrobial peptides 2-2 (666 aa).

An N-terminal signal peptide occupies residues M1–A27. 2 disordered regions span residues Q161 to Q191 and R221 to P251. A compositionally biased stretch (basic and acidic residues) spans R239 to P251. 2 Cupin type-1 domains span residues S271–R410 and Y455–E625.

The protein belongs to the 7S seed storage protein family.

It is found in the secreted. In terms of biological role, antimicrobial peptides 2b, 2c and 2d have antibacterial and antifungal activity against a range of species. This is Vicilin-like antimicrobial peptides 2-2 from Macadamia integrifolia (Macadamia nut).